The primary structure comprises 382 residues: MSDVIKNFFKLESAGGILLVIAAAIAMIIANSSFAPMYDTFLHTYLGGMSVSHWINDGLMAVFFLLIGLEVKRELLEGALKSKETAIFPAIAAVGGMLAPALVYVAFNMGDPEALSGWAIPAATDIAFALGIMALLGNRVPVSLKVFLLALAIIDDLGVVVIIAFFYTSDLSVLALVIGFVMTGILFLLNSKHVSKIRWYLLVGFILWVSVLQSGVHATLAGVVLGFAIPLKGKKGERSPLKHMEHALHPYVAFGILPLFAFANAGISLDGVSLDSLTTTLPLGVALGLFLGKPLGIFSFSYVAVKSGIAKLPAGVNMKHIFAVSVLCGIGFTMSIFISSLAFGGANPEFDKLARLGILMGSTLAAVVGYILLHISLPKKAA.

11 helical membrane-spanning segments follow: residues 14–34, 49–69, 87–107, 117–137, 146–166, 171–191, 205–225, 247–267, 285–305, 321–341, and 356–376; these read AGGILLVIAAAIAMIIANSSF, MSVSHWINDGLMAVFFLLIGL, IFPAIAAVGGMLAPALVYVAF, GWAIPAATDIAFALGIMALLG, VFLLALAIIDDLGVVVIIAFF, LSVLALVIGFVMTGILFLLNS, FILWVSVLQSGVHATLAGVVL, ALHPYVAFGILPLFAFANAGI, VALGLFLGKPLGIFSFSYVAV, IFAVSVLCGIGFTMSIFISSL, and LGILMGSTLAAVVGYILLHIS.

This sequence belongs to the NhaA Na(+)/H(+) (TC 2.A.33) antiporter family.

The protein resides in the cell inner membrane. The enzyme catalyses Na(+)(in) + 2 H(+)(out) = Na(+)(out) + 2 H(+)(in). In terms of biological role, na(+)/H(+) antiporter that extrudes sodium in exchange for external protons. The polypeptide is Na(+)/H(+) antiporter NhaA (Aliivibrio salmonicida (strain LFI1238) (Vibrio salmonicida (strain LFI1238))).